We begin with the raw amino-acid sequence, 429 residues long: Enolase (429 aa).

Residue Gln-174 coordinates (2R)-2-phosphoglycerate. Glu-218 functions as the Proton donor in the catalytic mechanism. Mg(2+) is bound by residues Asp-254, Glu-295, and Asp-321. 4 residues coordinate (2R)-2-phosphoglycerate: Lys-346, Arg-375, Ser-376, and Lys-397. Lys-346 serves as the catalytic Proton acceptor.

Belongs to the enolase family. Requires Mg(2+) as cofactor.

It localises to the cytoplasm. The protein localises to the secreted. Its subcellular location is the cell surface. It carries out the reaction (2R)-2-phosphoglycerate = phosphoenolpyruvate + H2O. It participates in carbohydrate degradation; glycolysis; pyruvate from D-glyceraldehyde 3-phosphate: step 4/5. Its function is as follows. Catalyzes the reversible conversion of 2-phosphoglycerate (2-PG) into phosphoenolpyruvate (PEP). It is essential for the degradation of carbohydrates via glycolysis. The sequence is that of Enolase from Methanosarcina acetivorans (strain ATCC 35395 / DSM 2834 / JCM 12185 / C2A).